Here is a 319-residue protein sequence, read N- to C-terminus: Aminoimidazole riboside kinase (319 aa).

5-amino-1-(beta-D-ribosyl)imidazole-binding residues include Asp16, Gly31, and Tyr101. 158 to 160 (DVN) provides a ligand contact to ATP. Arg162 is a 5-amino-1-(beta-D-ribosyl)imidazole binding site. Ala180, Ala181, and Ala183 together coordinate K(+). Positions 187 and 192 each coordinate ATP. Position 213 (Gly213) interacts with K(+). 220–225 (SLGADG) serves as a coordination point for ATP. 2 residues coordinate K(+): Asp246 and Thr248. Position 252 (Asp252) interacts with 5-amino-1-(beta-D-ribosyl)imidazole. The Proton acceptor role is filled by Asp252. Residue Asn281 coordinates ATP. K(+) is bound by residues Ala287, Ala290, and Gly292.

It belongs to the carbohydrate kinase PfkB family. As to quaternary structure, homodimer.

The catalysed reaction is 5-amino-1-(beta-D-ribosyl)imidazole + ATP = 5-amino-1-(5-phospho-beta-D-ribosyl)imidazole + ADP + H(+). Its activity is regulated as follows. Potassium may regulate kinase activity. Its function is as follows. Phosphorylates 5-amino-1-(beta-D-ribosyl)imidazole (AIRs) to form 5-amino-1-(5-phospho-beta-D-ribosyl)imidazole (AIR), an important intermediate in the purine and thiamine biosynthetic pathways. It allows the use of exogenous aminoimidazole riboside (AIRs) to satisfy the cellular requirement for purines and thiamine. The sequence is that of Aminoimidazole riboside kinase from Salmonella typhimurium (strain LT2 / SGSC1412 / ATCC 700720).